The primary structure comprises 171 residues: Ribosome maturation factor RimM (171 aa).

The region spanning 96-168 is the PRC barrel domain; that stretch reads EDGFYDHELE…TATITPPEGL (73 aa).

The protein belongs to the RimM family. Binds ribosomal protein uS19.

It localises to the cytoplasm. An accessory protein needed during the final step in the assembly of 30S ribosomal subunit, possibly for assembly of the head region. Essential for efficient processing of 16S rRNA. May be needed both before and after RbfA during the maturation of 16S rRNA. It has affinity for free ribosomal 30S subunits but not for 70S ribosomes. The protein is Ribosome maturation factor RimM of Corynebacterium glutamicum (strain R).